The primary structure comprises 93 residues: SH3 domain-binding glutamic acid-rich-like protein 3 (93 aa).

Residue serine 2 is modified to N-acetylserine. The Glutaredoxin domain maps to 2–93 (SGLRVYSTSV…NTLQEFLKLA (92 aa)). Threonine 9 carries O-linked (GalNAc...) threonine glycosylation.

Belongs to the SH3BGR family. Homodimer. Interacts with MYO1C (via its IQ motifs); the interaction is dependent on calcium and takes place at membrane ruffles. May be glycosylated.

It is found in the cytoplasm. It localises to the cytosol. The protein resides in the cell projection. Its subcellular location is the ruffle membrane. The protein localises to the nucleus. Could act as a modulator of glutaredoxin biological activity. May play a role in cytoskeleton organization. In Bos taurus (Bovine), this protein is SH3 domain-binding glutamic acid-rich-like protein 3 (SH3BGRL3).